An 888-amino-acid polypeptide reads, in one-letter code: Alanine--tRNA ligase (888 aa).

Residues His-571, His-575, Cys-674, and His-678 each coordinate Zn(2+).

The protein belongs to the class-II aminoacyl-tRNA synthetase family. Zn(2+) serves as cofactor.

It is found in the cytoplasm. The enzyme catalyses tRNA(Ala) + L-alanine + ATP = L-alanyl-tRNA(Ala) + AMP + diphosphate. Functionally, catalyzes the attachment of alanine to tRNA(Ala) in a two-step reaction: alanine is first activated by ATP to form Ala-AMP and then transferred to the acceptor end of tRNA(Ala). Also edits incorrectly charged Ser-tRNA(Ala) and Gly-tRNA(Ala) via its editing domain. In Nocardia farcinica (strain IFM 10152), this protein is Alanine--tRNA ligase.